The following is a 250-amino-acid chain: 4-hydroxy-tetrahydrodipicolinate reductase (250 aa).

Residues 10–15 (GARGRI), 78–80 (GTT), and 105–108 (APNF) contribute to the NAD(+) site. Catalysis depends on histidine 135, which acts as the Proton donor/acceptor. (S)-2,3,4,5-tetrahydrodipicolinate is bound at residue histidine 136. Lysine 139 (proton donor) is an active-site residue. A (S)-2,3,4,5-tetrahydrodipicolinate-binding site is contributed by 145–146 (GT). The interval 158 to 177 (RAEAGSAPQPDATTTALDGA) is disordered.

Belongs to the DapB family.

The protein resides in the cytoplasm. The enzyme catalyses (S)-2,3,4,5-tetrahydrodipicolinate + NAD(+) + H2O = (2S,4S)-4-hydroxy-2,3,4,5-tetrahydrodipicolinate + NADH + H(+). It carries out the reaction (S)-2,3,4,5-tetrahydrodipicolinate + NADP(+) + H2O = (2S,4S)-4-hydroxy-2,3,4,5-tetrahydrodipicolinate + NADPH + H(+). Its pathway is amino-acid biosynthesis; L-lysine biosynthesis via DAP pathway; (S)-tetrahydrodipicolinate from L-aspartate: step 4/4. Catalyzes the conversion of 4-hydroxy-tetrahydrodipicolinate (HTPA) to tetrahydrodipicolinate. The protein is 4-hydroxy-tetrahydrodipicolinate reductase of Streptomyces griseus subsp. griseus (strain JCM 4626 / CBS 651.72 / NBRC 13350 / KCC S-0626 / ISP 5235).